Here is a 668-residue protein sequence, read N- to C-terminus: Threonine--tRNA ligase (668 aa).

The TGS domain maps to Met-1–Arg-64. The tract at residues Asp-245–Pro-553 is catalytic. Zn(2+) contacts are provided by Cys-347, His-398, and His-530.

It belongs to the class-II aminoacyl-tRNA synthetase family. As to quaternary structure, homodimer. Requires Zn(2+) as cofactor.

It is found in the cytoplasm. The catalysed reaction is tRNA(Thr) + L-threonine + ATP = L-threonyl-tRNA(Thr) + AMP + diphosphate + H(+). Catalyzes the attachment of threonine to tRNA(Thr) in a two-step reaction: L-threonine is first activated by ATP to form Thr-AMP and then transferred to the acceptor end of tRNA(Thr). Also edits incorrectly charged L-seryl-tRNA(Thr). This chain is Threonine--tRNA ligase, found in Rhizobium etli (strain CIAT 652).